A 247-amino-acid polypeptide reads, in one-letter code: tRNA1(Val) (adenine(37)-N6)-methyltransferase (247 aa).

It belongs to the methyltransferase superfamily. tRNA (adenine-N(6)-)-methyltransferase family.

Its subcellular location is the cytoplasm. It catalyses the reaction adenosine(37) in tRNA1(Val) + S-adenosyl-L-methionine = N(6)-methyladenosine(37) in tRNA1(Val) + S-adenosyl-L-homocysteine + H(+). Its function is as follows. Specifically methylates the adenine in position 37 of tRNA(1)(Val) (anticodon cmo5UAC). This chain is tRNA1(Val) (adenine(37)-N6)-methyltransferase, found in Edwardsiella ictaluri (strain 93-146).